Consider the following 358-residue polypeptide: Chorismate synthase (358 aa).

NADP(+)-binding residues include arginine 46 and arginine 52. Residues 123 to 125 (RSS), 239 to 240 (NA), glycine 283, 298 to 302 (KSVAT), and arginine 324 contribute to the FMN site.

This sequence belongs to the chorismate synthase family. As to quaternary structure, homotetramer. Requires FMNH2 as cofactor.

The enzyme catalyses 5-O-(1-carboxyvinyl)-3-phosphoshikimate = chorismate + phosphate. It functions in the pathway metabolic intermediate biosynthesis; chorismate biosynthesis; chorismate from D-erythrose 4-phosphate and phosphoenolpyruvate: step 7/7. In terms of biological role, catalyzes the anti-1,4-elimination of the C-3 phosphate and the C-6 proR hydrogen from 5-enolpyruvylshikimate-3-phosphate (EPSP) to yield chorismate, which is the branch point compound that serves as the starting substrate for the three terminal pathways of aromatic amino acid biosynthesis. This reaction introduces a second double bond into the aromatic ring system. In Parabacteroides distasonis (strain ATCC 8503 / DSM 20701 / CIP 104284 / JCM 5825 / NCTC 11152), this protein is Chorismate synthase.